Reading from the N-terminus, the 220-residue chain is Ribose-5-phosphate isomerase A (220 aa).

Residues 28-31 (TGST), 81-84 (DGAD), and 94-97 (KGGG) contribute to the substrate site. Glutamate 103 acts as the Proton acceptor in catalysis. Lysine 121 contacts substrate.

The protein belongs to the ribose 5-phosphate isomerase family. In terms of assembly, homodimer.

It carries out the reaction aldehydo-D-ribose 5-phosphate = D-ribulose 5-phosphate. Its pathway is carbohydrate degradation; pentose phosphate pathway; D-ribose 5-phosphate from D-ribulose 5-phosphate (non-oxidative stage): step 1/1. Its function is as follows. Catalyzes the reversible conversion of ribose-5-phosphate to ribulose 5-phosphate. In Hydrogenovibrio crunogenus (strain DSM 25203 / XCL-2) (Thiomicrospira crunogena), this protein is Ribose-5-phosphate isomerase A.